Reading from the N-terminus, the 358-residue chain is Cyclin-D1-binding protein 1 (358 aa).

Interaction with TCF3 regions lie at residues 1–183 (MESA…VDLV) and 149–358 (ISYN…EVES). Interaction with RPLP0 stretches follow at residues 1-189 (MESA…AHEE) and 238-358 (LIIP…EVES). Residues 1-207 (MESAAVSAAP…DPYCGLLNDI (207 aa)) form a required for interaction with CCND1 region.

This sequence belongs to the CCNDBP1 family. As to quaternary structure, interacts with CCND1 and GRAP2. May also interact with COPS5, RPLP0, SIRT6, SYF2 and TCF3. Post-translationally, phosphorylated.

It is found in the cytoplasm. Its subcellular location is the nucleus. Its function is as follows. May negatively regulate cell cycle progression. May act at least in part via inhibition of the cyclin-D1/CDK4 complex, thereby preventing phosphorylation of RB1 and blocking E2F-dependent transcription. This Bos taurus (Bovine) protein is Cyclin-D1-binding protein 1 (CCNDBP1).